The primary structure comprises 178 residues: ATP synthase subunit delta (178 aa).

This sequence belongs to the ATPase delta chain family. In terms of assembly, F-type ATPases have 2 components, F(1) - the catalytic core - and F(0) - the membrane proton channel. F(1) has five subunits: alpha(3), beta(3), gamma(1), delta(1), epsilon(1). F(0) has three main subunits: a(1), b(2) and c(10-14). The alpha and beta chains form an alternating ring which encloses part of the gamma chain. F(1) is attached to F(0) by a central stalk formed by the gamma and epsilon chains, while a peripheral stalk is formed by the delta and b chains.

Its subcellular location is the cell inner membrane. Functionally, f(1)F(0) ATP synthase produces ATP from ADP in the presence of a proton or sodium gradient. F-type ATPases consist of two structural domains, F(1) containing the extramembraneous catalytic core and F(0) containing the membrane proton channel, linked together by a central stalk and a peripheral stalk. During catalysis, ATP synthesis in the catalytic domain of F(1) is coupled via a rotary mechanism of the central stalk subunits to proton translocation. In terms of biological role, this protein is part of the stalk that links CF(0) to CF(1). It either transmits conformational changes from CF(0) to CF(1) or is implicated in proton conduction. This chain is ATP synthase subunit delta, found in Dechloromonas aromatica (strain RCB).